Here is a 382-residue protein sequence, read N- to C-terminus: G-box-binding factor 3 (382 aa).

The segment covering 1–16 has biased composition (basic and acidic residues); it reads MGNSSEEPKPPTKSDK. Disordered regions lie at residues 1–26, 97–221, and 257–285; these read MGNSSEEPKPPTKSDKPSSPPVDQTN, MGSL…GVKL, and ERELKRERRKQSNRESARRSRLRKQAETE. Polar residues predominate over residues 111-130; it reads TPGTLLSIDTPTKSTGNTDN. Positions 155–165 are enriched in basic and acidic residues; the sequence is ADEHKRSRNSS. The segment covering 166 to 181 has biased composition (low complexity); it reads ETDGSTDGSDGNTTGA. A compositionally biased stretch (basic and acidic residues) spans 182-199; sequence DEPKLKRSREGTPTKDGK. Residues 202-216 are compositionally biased toward polar residues; the sequence is VQASSFHSVSPSSGD. A bZIP domain is found at 259–322; the sequence is ELKRERRKQS…DKLRGANATL (64 aa). The interval 261–280 is basic motif; that stretch reads KRERRKQSNRESARRSRLRK. The leucine-zipper stretch occupies residues 287–322; the sequence is LARKVEALTAENMALRSELNQLNEKSDKLRGANATL. The interval 329–382 is disordered; it reads SEPEKRVPANMLSRVKNSGAGDKNKNQGDNDSNSTSKLHQLLDTKPRAKAVAAG. Residues 357–366 are compositionally biased toward polar residues; the sequence is DNDSNSTSKL.

It belongs to the bZIP family. In terms of assembly, DNA-binding heterodimer. Interacts with GBF4. Interacts with BZIP16 and BZIP68. In terms of tissue distribution, present only in dark grown leaves and roots.

It is found in the nucleus. Binds to the G-box motif (5'-CCACGTGG-3') of the rbcS-1A gene promoter. G-box and G-box-like motifs are cis-acting elements defined in promoters of certain plant genes which are regulated by such diverse stimuli as light-induction or hormone control. The sequence is that of G-box-binding factor 3 (GBF3) from Arabidopsis thaliana (Mouse-ear cress).